Reading from the N-terminus, the 237-residue chain is RNA chaperone ProQ (237 aa).

Positions 106 to 188 are disordered; sequence AKARVQAQRA…QPRPVPVTDI (83 aa). Residues 146–158 show a composition bias toward basic and acidic residues; sequence PRREAGAAPENRK.

Belongs to the ProQ family.

The protein localises to the cytoplasm. In terms of biological role, RNA chaperone with significant RNA binding, RNA strand exchange and RNA duplexing activities. May regulate ProP activity through an RNA-based, post-transcriptional mechanism. In Yersinia pseudotuberculosis serotype O:1b (strain IP 31758), this protein is RNA chaperone ProQ.